We begin with the raw amino-acid sequence, 737 residues long: Death domain-associated protein 6 (737 aa).

Residues 1–55 (MATANSIIVLDDDDEDEAAAQPGPSHPPPNPASPQAEAPGSSQPHGAGGSSSSGG) form a disordered region. The tract at residues 1 to 159 (MATANSIIVL…TSSEPSGNNP (159 aa)) is necessary for interaction with USP7 and ATRX. Ser-25 bears the Phosphoserine mark. A compositionally biased stretch (low complexity) spans 33 to 45 (SPQAEAPGSSQPH). Lys-142 participates in a covalent cross-link: Glycyl lysine isopeptide (Lys-Gly) (interchain with G-Cter in SUMO2). The interval 145–184 (LAPAATSSEPSGNNPPTDPSSDPTNAETTASEAPRTRGSR) is disordered. Over residues 149 to 175 (ATSSEPSGNNPPTDPSSDPTNAETTAS) the composition is skewed to polar residues. Residues 179-216 (RTRGSRRQIQRLEQLLALYVAEIRRLQEKELDLSELDD) adopt a coiled-coil conformation. An interaction with histone H3.3 region spans residues 182–417 (GSRRQIQRLE…PLKASLDSGE (236 aa)). Position 212 is a phosphoserine (Ser-212). A necessary for interaction with USP7 region spans residues 346–567 (GIDPALSDPA…SPISQLFELE (222 aa)). The interval 382 to 556 (QDKSEEGERQ…ENLEELLLEE (175 aa)) is disordered. The Nuclear localization signal motif lies at 390-394 (RQKRR). Ser-412 and Ser-424 each carry phosphoserine. The segment covering 422–432 (MASQECPTTSK) has biased composition (polar residues). Residues 432 to 474 (KPETDDEEDEESEEEEEEEEEEEEEEATDSEEEEDLEQMQEGQ) are a coiled coil. Over residues 435–489 (TDDEEDEESEEEEEEEEEEEEEEATDSEEEEDLEQMQEGQGDDEEEEEEEEEAGQ) the composition is skewed to acidic residues. Thr-459 bears the Phosphothreonine mark. Ser-494 and Ser-497 each carry phosphoserine. At Lys-511 the chain carries N6-acetyllysine. A compositionally biased stretch (polar residues) spans 517–527 (MGEQQNKEFTV). The span at 528–547 (SPSSEEPLAPSSIDAESNGE) shows a compositional bias: low complexity. 2 positions are modified to phosphoserine: Ser-558 and Ser-578. The tract at residues 569–719 (EALPLDTTPS…QPSRPGTYKM (151 aa)) is disordered. A compositionally biased stretch (basic and acidic residues) spans 579–592 (PEERDISSSRKQSE). The tract at residues 624-737 (CPPCKKSRKE…EEIIVLSDSD (114 aa)) is interaction with SPOP. The Nuclear localization signal signature appears at 626 to 632 (PCKKSRK). Residues Lys-628 and Lys-629 each participate in a glycyl lysine isopeptide (Lys-Gly) (interchain with G-Cter in SUMO1) cross-link. Basic and acidic residues predominate over residues 647–657 (ERQRSVHEKNG). Phosphoserine is present on residues Ser-665, Ser-668, Ser-685, Ser-699, Ser-734, and Ser-736. Residues 678–713 (DSSTRVDSPSHGLVTSSLCSASQARLSQTPHSQPSR) show a composition bias toward polar residues. Residues 730–737 (IIVLSDSD) are sumo interaction motif (SIM).

This sequence belongs to the DAXX family. In terms of assembly, homomultimer. Interacts (via C-terminus) with TNFRSF6 (via death domain). Interacts with PAX5, SLC2A4/GLUT4, MAP3K5, TGFBR2, phosphorylated dimeric HSPB1/HSP27, CENPC, ETS1, sumoylated PML, UBE2I, MCRS1 and TP53. Interacts (via N-terminus) with HIPK2 and HIPK3. Interacts with HIPK1, which induces translocation from PML/POD/ND10 nuclear bodies to chromatin and enhances association with HDAC1. Interacts (non-phosphorylated) with PAX3, PAX7, DEK, HDAC1, HDAC2, HDAC3, acetylated histone H4 and histones H2A, H2B, H3, H3.3 and H4. Interacts with SPOP; mediating CUL3-dependent proteasomal degradation. Interacts with CBP; the interaction is dependent the sumoylation of CBP and suppresses CBP transcriptional activity via recruitment of HDAC2 directly in the complex with TP53 and HIPK2. Interacts with AXIN1; the interaction stimulates the interaction of DAXX with TP53, stimulates 'Ser-46' phosphorylation of TP53 on and induces cell death on UV irradiation. Interacts with MDM2; the interaction is direct. Interacts with USP7; the interaction is direct and independent of MDM2 and TP53. Part of a complex with DAXX, MDM2 and USP7 under non-stress conditions. Interacts (via N-terminus) with RASSF1 (via C-terminus); the interaction is independent of MDM2 and TP53; RASSF1 isoform A disrupts interactions among MDM2, DAXX and USP7, thus contributing to the efficient activation of TP53 by promoting MDM2 self-ubiquitination in cell-cycle checkpoint control in response to DNA damage. Interacts with ATRX to form the chromatin remodeling complex ATRX:DAXX. Interacts with HSF1 (via homotrimeric form preferentially); this interaction relieves homotrimeric HSF1 from repression of its transcriptional activity by HSP90-dependent multichaperone complex upon heat shock. In terms of processing, sumoylated with SUMO1 on multiple lysine residues. Polyubiquitinated; which is promoted by CUL3 and SPOP and results in proteasomal degradation. Ubiquitinated by MDM2; inducing its degradation. Deubiquitinated by USP7; leading to stabilize it.

The protein resides in the cytoplasm. Its subcellular location is the nucleus. It localises to the nucleoplasm. It is found in the PML body. The protein localises to the nucleolus. The protein resides in the chromosome. Its subcellular location is the centromere. In terms of biological role, transcription corepressor known to repress transcriptional potential of several sumoylated transcription factors. Down-regulates basal and activated transcription. Its transcription repressor activity is modulated by recruiting it to subnuclear compartments like the nucleolus or PML/POD/ND10 nuclear bodies through interactions with MCSR1 and PML, respectively. Seems to regulate transcription in PML/POD/ND10 nuclear bodies together with PML and may influence TNFRSF6-dependent apoptosis thereby. Inhibits transcriptional activation of PAX3 and ETS1 through direct protein-protein interactions. Modulates PAX5 activity; the function seems to involve CREBBP. Acts as an adapter protein in a MDM2-DAXX-USP7 complex by regulating the RING-finger E3 ligase MDM2 ubiquitination activity. Under non-stress condition, in association with the deubiquitinating USP7, prevents MDM2 self-ubiquitination and enhances the intrinsic E3 ligase activity of MDM2 towards TP53, thereby promoting TP53 ubiquitination and subsequent proteasomal degradation. Upon DNA damage, its association with MDM2 and USP7 is disrupted, resulting in increased MDM2 autoubiquitination and consequently, MDM2 degradation, which leads to TP53 stabilization. Acts as a histone chaperone that facilitates deposition of histone H3.3. Acts as a targeting component of the chromatin remodeling complex ATRX:DAXX which has ATP-dependent DNA translocase activity and catalyzes the replication-independent deposition of histone H3.3 in pericentric DNA repeats outside S-phase and telomeres, and the in vitro remodeling of H3.3-containing nucleosomes. Does not affect the ATPase activity of ATRX but alleviates its transcription repression activity. Upon neuronal activation associates with regulatory elements of selected immediate early genes where it promotes deposition of histone H3.3 which may be linked to transcriptional induction of these genes. Required for the recruitment of histone H3.3:H4 dimers to PML-nuclear bodies (PML-NBs); the process is independent of ATRX and facilitated by ASF1A; PML-NBs are suggested to function as regulatory sites for the incorporation of newly synthesized histone H3.3 into chromatin. Proposed to mediate activation of the JNK pathway and apoptosis via MAP3K5 in response to signaling from TNFRSF6 and TGFBR2. Interaction with HSPB1/HSP27 may prevent interaction with TNFRSF6 and MAP3K5 and block DAXX-mediated apoptosis. In contrast, in lymphoid cells JNC activation and TNFRSF6-mediated apoptosis may not involve DAXX. Plays a role as a positive regulator of the heat shock transcription factor HSF1 activity during the stress protein response. This Canis lupus familiaris (Dog) protein is Death domain-associated protein 6 (DAXX).